A 482-amino-acid polypeptide reads, in one-letter code: Probable cytosol aminopeptidase (482 aa).

Residues Lys251 and Asp256 each coordinate Mn(2+). Lys263 is an active-site residue. Residues Asp274, Asp333, and Glu335 each coordinate Mn(2+). Residue Arg337 is part of the active site.

This sequence belongs to the peptidase M17 family. It depends on Mn(2+) as a cofactor.

Its subcellular location is the cytoplasm. The catalysed reaction is Release of an N-terminal amino acid, Xaa-|-Yaa-, in which Xaa is preferably Leu, but may be other amino acids including Pro although not Arg or Lys, and Yaa may be Pro. Amino acid amides and methyl esters are also readily hydrolyzed, but rates on arylamides are exceedingly low.. It carries out the reaction Release of an N-terminal amino acid, preferentially leucine, but not glutamic or aspartic acids.. Presumably involved in the processing and regular turnover of intracellular proteins. Catalyzes the removal of unsubstituted N-terminal amino acids from various peptides. This is Probable cytosol aminopeptidase from Acinetobacter baumannii (strain AB307-0294).